The sequence spans 74 residues: U-scoloptoxin(09)-Sm3a (74 aa).

Residues Met1–Ser22 form the signal peptide.

The protein belongs to the scoloptoxin-09 family. Post-translationally, contains 3 disulfide bonds. In terms of tissue distribution, expressed by the venom gland.

It is found in the secreted. This Scolopendra morsitans (Tanzanian blue ringleg centipede) protein is U-scoloptoxin(09)-Sm3a.